The chain runs to 654 residues: Glutamyl-tRNA(Gln) amidotransferase subunit B, mitochondrial (654 aa).

A mitochondrion-targeting transit peptide spans 1 to 8; sequence MGRIPTRE. A disordered region spans residues 79–101; that stretch reads DQAKASKAQAKGKKKRSSADNQT.

Belongs to the GatB/GatE family. GatB subfamily. As to quaternary structure, subunit of the heterotrimeric GatCAB amidotransferase (AdT) complex, composed of A, B and C subunits.

It localises to the mitochondrion. It carries out the reaction L-glutamyl-tRNA(Gln) + L-glutamine + ATP + H2O = L-glutaminyl-tRNA(Gln) + L-glutamate + ADP + phosphate + H(+). Its function is as follows. Allows the formation of correctly charged Gln-tRNA(Gln) through the transamidation of misacylated Glu-tRNA(Gln) in the mitochondria. The reaction takes place in the presence of glutamine and ATP through an activated gamma-phospho-Glu-tRNA(Gln). The polypeptide is Glutamyl-tRNA(Gln) amidotransferase subunit B, mitochondrial (Pyricularia oryzae (strain 70-15 / ATCC MYA-4617 / FGSC 8958) (Rice blast fungus)).